The chain runs to 329 residues: BTB/POZ domain-containing adapter for CUL3-mediated RhoA degradation protein 1 (329 aa).

The span at 1-15 shows a compositional bias: low complexity; that stretch reads MSAEASGPAAAEAPS. Residues 1-21 form a disordered region; it reads MSAEASGPAAAEAPSLEVAKP. The BTB domain maps to 41–109; that stretch reads KYVKLNVGGS…LRDGSVPLPE (69 aa). The segment at 280 to 302 is disordered; it reads LEATGGAAGGGGASRGEDEDNRE.

Belongs to the BACURD family. In terms of assembly, homotetramer; forms a two-fold symmetric tetramer in solution. Interacts with CUL3; interaction is direct and forms a 5:5 heterodecamer. Component of the BCR(KCTD13) E3 ubiquitin ligase complex, at least composed of CUL3, KCTD13/BACURD1 and RBX1. Interacts with RHOA; with a preference for RhoA-GDP. Interacts with POLD2 and PCNA. Interacts with SPRTN.

The protein localises to the nucleus. The protein operates within protein modification; protein ubiquitination. Its function is as follows. Substrate-specific adapter of a BCR (BTB-CUL3-RBX1) E3 ubiquitin-protein ligase complex required for synaptic transmission. The BCR(KCTD13) E3 ubiquitin ligase complex mediates the ubiquitination of RHOA, leading to its degradation by the proteasome, thereby regulating the actin cytoskeleton and promoting synaptic transmission. This chain is BTB/POZ domain-containing adapter for CUL3-mediated RhoA degradation protein 1 (KCTD13), found in Bos taurus (Bovine).